An 898-amino-acid chain; its full sequence is Alanine--tRNA ligase (898 aa).

The Zn(2+) site is built by histidine 584, histidine 588, cysteine 686, and histidine 690.

This sequence belongs to the class-II aminoacyl-tRNA synthetase family. Zn(2+) serves as cofactor.

Its subcellular location is the cytoplasm. The catalysed reaction is tRNA(Ala) + L-alanine + ATP = L-alanyl-tRNA(Ala) + AMP + diphosphate. Functionally, catalyzes the attachment of alanine to tRNA(Ala) in a two-step reaction: alanine is first activated by ATP to form Ala-AMP and then transferred to the acceptor end of tRNA(Ala). Also edits incorrectly charged Ser-tRNA(Ala) and Gly-tRNA(Ala) via its editing domain. This is Alanine--tRNA ligase from Myxococcus xanthus (strain DK1622).